Reading from the N-terminus, the 1196-residue chain is Homeodomain-interacting protein kinase 2 (1196 aa).

S16 carries the post-translational modification Phosphoserine. K32 is covalently cross-linked (Glycyl lysine isopeptide (Lys-Gly) (interchain with G-Cter in SUMO); alternate). Residue K32 forms a Glycyl lysine isopeptide (Lys-Gly) (interchain with G-Cter in SUMO2); alternate linkage. The disordered stretch occupies residues V50 to T69. The transcriptional corepression stretch occupies residues S97–L230. Phosphoserine is present on residues S118 and S135. T141 carries the post-translational modification Phosphothreonine. The interaction with DAXX stretch occupies residues H189–E520. In terms of domain architecture, Protein kinase spans Y199 to V527. ATP contacts are provided by residues L205–V213 and K228. A phosphothreonine mark is found at T252 and T273. Residue D324 is the Proton acceptor of the active site. Residue Y361 is modified to Phosphotyrosine; by autocatalysis. S441 carries the post-translational modification Phosphoserine. Phosphothreonine is present on residues T482, T517, and T566. Positions A539–M844 are interaction with SKI and SMAD1. Residues S600 to S800 form an interaction with DAZAP2 region. Phosphoserine occurs at positions 634 and 668. Phosphothreonine is present on T687. Residues R752 to E897 are interaction with POU4F1. The tract at residues H774–V876 is interaction with CTBP1. The interaction with HMGA1 stretch occupies residues V787 to E897. 2 disordered regions span residues R792–S847 and S891–N963. Residues Q793–Q829 show a composition bias toward polar residues. A Nuclear localization signal 1 (NLS1) motif is present at residues R802–K805. Residues S815 and S827 each carry the phosphoserine modification. The short motif at K832–K835 is the Nuclear localization signal 2 (NLS2) element. The interval P839 to S934 is interaction with TP53 and TP73. An interaction with UBE2I region spans residues Q873–T907. A localization to nuclear speckles region spans residues Q873–L980. A required for localization to nuclear speckles region spans residues Q873 to L980. The tract at residues T884 to V908 is SUMO interaction motifs (SIM); required for nuclear localization and kinase activity. A compositionally biased stretch (low complexity) spans D923–S937. S934 carries the post-translational modification Phosphoserine. Positions P935 to A1050 are interaction with AXIN1. Positions V938–D951 are enriched in polar residues. Glycyl lysine isopeptide (Lys-Gly) (interchain with G-Cter in SUMO2) cross-links involve residues K953 and K973. Residues D984 to I1196 are autoinhibitory domain (AID). 5 positions are modified to phosphoserine: S991, S993, S1042, S1153, and S1186. Residues S991 to Q1046 are compositionally biased toward low complexity. A disordered region spans residues S991–R1058. A Glycyl lysine isopeptide (Lys-Gly) (interchain with G-Cter in SUMO) cross-link involves residue K1189.

This sequence belongs to the protein kinase superfamily. CMGC Ser/Thr protein kinase family. HIPK subfamily. In terms of assembly, interacts with CREB1, SIAH1, WSB1, CBX4, TRADD, p53/TP53, TP73, TP63, CREBBP, DAXX, P53DINP1, SKI, SMAD1, SMAD2 and SMAD3, but not SMAD4. Interacts with SP100; positively regulates TP53-dependent transcription. Interacts with ATF1, PML, RUNX1, EP300, NKX1-2, NKX2-5, UBE2I, HMGA1, CTBP1, AXIN1, NLK, MYB, POU4F1, POU4F2, POU4F3, UBE2I, UBL1 and ZBTB4. Probably part of a complex consisting of p53/TP53, HIPK2 and AXIN1. Interacts with DAZAP2; the interaction results in phosphorylation of DAZAP2 which causes localization of DAZAP2 to the nucleus, reduces interaction of DAZAP2 with HIPK2 and prevents DAZAP2-dependent degradation of HIPK2. Interacts with SIAH1; the interaction is promoted by DAZAP2 and results in SIAH1-mediated ubiquitination and subsequent proteasomal degradation of HIPK2. Interacts with SPN/CD43 cytoplasmic tail. Post-translationally, sumoylated. When conjugated it is directed to nuclear speckles. Desumoylated by SENP1. Sumoylation on Lys-32 is promoted by the E3 SUMO-protein ligase CBX4. In terms of processing, autophosphorylation at Tyr-361 in the activation loop activates the kinase and promotes nuclear localization. Ubiquitinated by FBXO3, WSB1 and SIAH1, leading to rapid proteasome-dependent degradation. The degradation mediated by FBXO3, but not ubiquitination, is prevented in the presence of PML. The degradation mediated by WSB1 and SIAH1 is reversibly reduced upon DNA damage. Post-translationally, cleaved at Asp-923 and Asp-984 by CASP6 in a p53/TP53-dependent manner. The cleaved form lacks the autoinhibitory C-terminal domain (AID), resulting in a hyperactive kinase, which potentiates p53/TP53 Ser-46 phosphorylation and subsequent activation of the cell death machinery. As to expression, ubiquitous. Abundant in muscle, heart, small intestine, stomach, kidney and brain; and low in testis, skin and lung.

It localises to the nucleus. It is found in the PML body. The protein localises to the cytoplasm. The catalysed reaction is L-seryl-[protein] + ATP = O-phospho-L-seryl-[protein] + ADP + H(+). The enzyme catalyses L-threonyl-[protein] + ATP = O-phospho-L-threonyl-[protein] + ADP + H(+). In terms of biological role, serine/threonine-protein kinase involved in transcription regulation, p53/TP53-mediated cellular apoptosis and regulation of the cell cycle. Acts as a corepressor of several transcription factors, including SMAD1 and POU4F1/Brn3a and probably NK homeodomain transcription factors. Phosphorylates PDX1, ATF1, PML, p53/TP53, CREB1, CTBP1, CBX4, RUNX1, EP300, CTNNB1, HMGA1, ZBTB4 and DAZAP2. Inhibits cell growth and promotes apoptosis through the activation of p53/TP53 both at the transcription level and at the protein level (by phosphorylation and indirect acetylation). The phosphorylation of p53/TP53 may be mediated by a p53/TP53-HIPK2-AXIN1 complex. Involved in the response to hypoxia by acting as a transcriptional co-suppressor of HIF1A. Mediates transcriptional activation of TP73. In response to TGFB, cooperates with DAXX to activate JNK. Negative regulator through phosphorylation and subsequent proteasomal degradation of CTNNB1 and the antiapoptotic factor CTBP1. In the Wnt/beta-catenin signaling pathway acts as an intermediate kinase between MAP3K7/TAK1 and NLK to promote the proteasomal degradation of MYB. Phosphorylates CBX4 upon DNA damage and promotes its E3 SUMO-protein ligase activity. Activates CREB1 and ATF1 transcription factors by phosphorylation in response to genotoxic stress. In response to DNA damage, stabilizes PML by phosphorylation. PML, HIPK2 and FBXO3 may act synergically to activate p53/TP53-dependent transactivation. Promotes angiogenesis, and is involved in erythroid differentiation, especially during fetal liver erythropoiesis. Phosphorylation of RUNX1 and EP300 stimulates EP300 transcription regulation activity. Triggers ZBTB4 protein degradation in response to DNA damage. In response to DNA damage, phosphorylates DAZAP2 which localizes DAZAP2 to the nucleus, reduces interaction of DAZAP2 with HIPK2 and prevents DAZAP2-dependent ubiquitination of HIPK2 by E3 ubiquitin-protein ligase SIAH1 and subsequent proteasomal degradation. Modulates HMGA1 DNA-binding affinity. In response to high glucose, triggers phosphorylation-mediated subnuclear localization shifting of PDX1. Involved in the regulation of eye size, lens formation and retinal lamination during late embryogenesis. This is Homeodomain-interacting protein kinase 2 (Hipk2) from Mus musculus (Mouse).